We begin with the raw amino-acid sequence, 594 residues long: UvrABC system protein C (594 aa).

The GIY-YIG domain maps to 14 to 91 (DQPGCYLMKD…IKKHDPKYNI (78 aa)). Residues 196–231 (KEVRSELETKMYEASEKLEFERAKELRDQIAHIDAI) form the UVR domain.

This sequence belongs to the UvrC family. As to quaternary structure, interacts with UvrB in an incision complex.

It localises to the cytoplasm. Its function is as follows. The UvrABC repair system catalyzes the recognition and processing of DNA lesions. UvrC both incises the 5' and 3' sides of the lesion. The N-terminal half is responsible for the 3' incision and the C-terminal half is responsible for the 5' incision. The chain is UvrABC system protein C from Bacillus cereus (strain Q1).